Here is a 337-residue protein sequence, read N- to C-terminus: Adenylosuccinate synthetase (337 aa).

GTP is bound by residues G12–K18 and G42–T44. D13 serves as the catalytic Proton acceptor. D13 and G42 together coordinate Mg(2+). IMP is bound by residues D13 to K16, N40 to H43, T127, R141, Q179, T194, and R256. Residue H43 is the Proton donor of the active site. T252–R258 contributes to the substrate binding site. Residues R258, C284 to D286, and S324 to G326 each bind GTP.

The protein belongs to the adenylosuccinate synthetase family. Homodimer. Mg(2+) is required as a cofactor.

The protein localises to the cytoplasm. The enzyme catalyses IMP + L-aspartate + GTP = N(6)-(1,2-dicarboxyethyl)-AMP + GDP + phosphate + 2 H(+). The protein operates within purine metabolism; AMP biosynthesis via de novo pathway; AMP from IMP: step 1/2. In terms of biological role, plays an important role in the de novo pathway of purine nucleotide biosynthesis. Catalyzes the first committed step in the biosynthesis of AMP from IMP. The chain is Adenylosuccinate synthetase from Methanococcus maripaludis (strain C5 / ATCC BAA-1333).